Here is a 603-residue protein sequence, read N- to C-terminus: MLSVIRVHLPSEIPIVGCELTPYVLVRRPDKNSTTDDVPESAPLEGYFLRYRWYRVQSDKKVTICSVHPTEQATLQCVFCSKRRSLVPKSYHCSPKCFTDAWQHHRTLHERAAAENNANEDDDLNRNNSAGSGSLAGSLSGSMSNLSIANNGPAPFYPSNITQKNGGETLVEVGGCKTYTPTADDISHVLKFECVVANAETKQIVGHPSTILTSRVIPAPSPSPRKLIPVNGADGMGHLDQDARIQSAGSFTVLSYNILSDTSASSDLYSYCPPWALSWPYRRQNLLREIVGYRADVVCLQEVQSDHFHEIFAPELDKHGYQALYKRKTNEVLSGSTSAIDGCATFFRRDRFSHVKKYDVEFNKAAQSLTDALIPQAQKRTALNRLVKDNIALIVVLEAKFGNQPTDPSGKRQLICVANTHVNVQQDLKDVKLWQVHTLLKGLEKIAASADIPMLVCGDFNTLPGSAPHTLLVMGKVDPMHPDLAVDPLNILRPHTKLTHQLPLVSAYSSFVRKGIMGLGLEQHRRRIDLNTNEPLFTNCTRDFIGTHDYIFYTADTLMVESLLELLDEDGLRKDTALPSPEWSSNHIALLAEFRCTPRTRRG.

Residues 115–136 (ENNANEDDDLNRNNSAGSGSLA) are disordered. Low complexity predominate over residues 126–136 (RNNSAGSGSLA). Residue Glu-302 participates in Mg(2+) binding.

Belongs to the CCR4/nocturin family. Component of the CCR4-NOT complex, at least composed of CRR4 and CAF1 proteins. Mg(2+) serves as cofactor.

Its subcellular location is the nucleus. The protein resides in the cytoplasm. It carries out the reaction Exonucleolytic cleavage of poly(A) to 5'-AMP.. Functionally, acts as a catalytic component of the CCR4-NOT core complex, which in the nucleus seems to be a general transcription factor, and in the cytoplasm the major mRNA deadenylase involved in mRNA turnover. The polypeptide is Carbon catabolite repressor protein 4 homolog 2 (CCR4-2) (Arabidopsis thaliana (Mouse-ear cress)).